A 126-amino-acid chain; its full sequence is Flagellar protein FliT (126 aa).

Positions 1–50 (MASPHRLLKDYQQLLSLSQKILHLAVNGQWDTLVEQEIVYVQSVEGLVNT) are required for homodimerization. The fliD binding stretch occupies residues 60 to 98 (MRLHLRQILQEVMDNEAKVKQLLQKRMDELSSLMGQSLK).

It belongs to the FliT family. Homodimer. Interacts with FliD and FlhC.

The protein resides in the cytoplasm. It is found in the cytosol. In terms of biological role, dual-function protein that regulates the transcription of class 2 flagellar operons and that also acts as an export chaperone for the filament-capping protein FliD. As a transcriptional regulator, acts as an anti-FlhDC factor; it directly binds FlhC, thus inhibiting the binding of the FlhC/FlhD complex to class 2 promoters, resulting in decreased expression of class 2 flagellar operons. As a chaperone, effects FliD transition to the membrane by preventing its premature polymerization, and by directing it to the export apparatus. In Pectobacterium carotovorum subsp. carotovorum (strain PC1), this protein is Flagellar protein FliT.